The sequence spans 606 residues: Aspartate--tRNA(Asp/Asn) ligase (606 aa).

Glu-177 is a binding site for L-aspartate. Residues 201-204 (QLFK) are aspartate. Arg-223 is a binding site for L-aspartate. ATP-binding positions include 223–225 (RDE) and Gln-232. His-461 contacts L-aspartate. Glu-499 serves as a coordination point for ATP. L-aspartate is bound at residue Arg-506. 551–554 (GLDR) serves as a coordination point for ATP.

This sequence belongs to the class-II aminoacyl-tRNA synthetase family. Type 1 subfamily. In terms of assembly, homodimer.

The protein localises to the cytoplasm. The enzyme catalyses tRNA(Asx) + L-aspartate + ATP = L-aspartyl-tRNA(Asx) + AMP + diphosphate. Functionally, aspartyl-tRNA synthetase with relaxed tRNA specificity since it is able to aspartylate not only its cognate tRNA(Asp) but also tRNA(Asn). Reaction proceeds in two steps: L-aspartate is first activated by ATP to form Asp-AMP and then transferred to the acceptor end of tRNA(Asp/Asn). This is Aspartate--tRNA(Asp/Asn) ligase from Prochlorococcus marinus (strain NATL2A).